We begin with the raw amino-acid sequence, 710 residues long: MDQVATLRLESVDLQSSRNNKEHHTQEMGVKRLTVRRGQPFYLRLSFSRPFQSQNDHITFVAETGPKPSELLGTRATFFLTRVQPGNVWSASDFTIDSNSLQVSLFTPANAVIGHYTLKIEISQGQGHSVTYPLGTFILLFNPWSPEDDVYLPSEILLQEYIMRDYGFVYKGHERFITSWPWNYGQFEEDIIDICFEILNKSLYHLKNPAKDCSQRNDVVYVCRVVSAMINSNDDNGVLQGNWGEDYSKGVSPLEWKGSVAILQQWSARGGQPVKYGQCWVFASVMCTVMRCLGVPTRVVSNFRSAHNVDRNLTIDTYYDRNAEMLSTQKRDKIWNFHVWNECWMIRKDLPPGYNGWQVLDPTPQQTSSGLFCCGPASVKAIREGDVHLAYDTPFVYAEVNADEVIWLLGDGQAQEILAHNTSSIGKEISTKMVGSDQRQSITSSYKYPEGSPEERAVFMKASRKMLGPQRASLPFLDLLESGGLRDQPAQLQLHLARIPEWGQDLQLLLRIQRVPDSTHPRGPIGLVVRFCAQALLHGGGTQKPFWRHTVRMNLDFGKETQWPLLLPYSNYRNKLTDEKLIRVSGIAEVEETGRSMLVLKDICLEPPHLSIEVSERAEVGKALRVHVTLTNTLMVALSSCTMVLEGSGLINGQIAKDLGTLVAGHTLQIQLDLYPTKAGPRQLQVLISSNEVKEIKGYKDIFVTVAGAP.

Active-site residues include cysteine 279, histidine 338, and aspartate 361. The Ca(2+) site is built by asparagine 401, aspartate 403, glutamate 450, and glutamate 455.

The protein belongs to the transglutaminase superfamily. Transglutaminase family. It depends on Ca(2+) as a cofactor. In terms of tissue distribution, widely expressed.

The enzyme catalyses L-glutaminyl-[protein] + L-lysyl-[protein] = [protein]-L-lysyl-N(6)-5-L-glutamyl-[protein] + NH4(+). Functionally, catalyzes the cross-linking of proteins and the conjugation of polyamines to proteins. The chain is Protein-glutamine gamma-glutamyltransferase Z (TGM7) from Homo sapiens (Human).